Consider the following 446-residue polypeptide: Tubulin beta-1 chain (446 aa).

GTP contacts are provided by Q13, E71, S140, G144, T145, G146, N206, and N228. E71 contributes to the Mg(2+) binding site. The tract at residues V421–E446 is disordered. A compositionally biased stretch (acidic residues) spans S431–E446.

Belongs to the tubulin family. As to quaternary structure, dimer of alpha and beta chains. A typical microtubule is a hollow water-filled tube with an outer diameter of 25 nm and an inner diameter of 15 nM. Alpha-beta heterodimers associate head-to-tail to form protofilaments running lengthwise along the microtubule wall with the beta-tubulin subunit facing the microtubule plus end conferring a structural polarity. Microtubules usually have 13 protofilaments but different protofilament numbers can be found in some organisms and specialized cells. It depends on Mg(2+) as a cofactor.

Its subcellular location is the cytoplasm. It localises to the cytoskeleton. In terms of biological role, tubulin is the major constituent of microtubules, a cylinder consisting of laterally associated linear protofilaments composed of alpha- and beta-tubulin heterodimers. Microtubules grow by the addition of GTP-tubulin dimers to the microtubule end, where a stabilizing cap forms. Below the cap, tubulin dimers are in GDP-bound state, owing to GTPase activity of alpha-tubulin. The polypeptide is Tubulin beta-1 chain (tub1) (Hypocrea rufa (Trichoderma viride)).